The sequence spans 329 residues: Transcription factor MYB2 (329 aa).

HTH myb-type domains follow at residues 17-69 (GGDL…LNYL) and 70-124 (RPDL…QKHA). DNA-binding regions (H-T-H motif) lie at residues 45-69 (WNSLARSAGLKRTGKSCRLRWLNYL) and 97-120 (WSKIAQHLPGRTDNEIKNYWRTRV). Composition is skewed to low complexity over residues 155–166 (AAAGQQQQQEGG) and 217–235 (LSSTTAGSSSLSTDSGAGA). Disordered regions lie at residues 155-189 (AAAGQQQQQEGGTDTPPLSWQHGGSDGLYESPELP) and 206-242 (GAQSGGTPAPELSSTTAGSSSLSTDSGAGAQPSWPTQ).

In terms of tissue distribution, highly expressed in leaves. Expressed in roots and shoots. Expressed at low levels in flowers.

It is found in the nucleus. Functionally, transcription factor involved in abiotic stress responses. Plays a regulatory role in tolerance to salt, cold, and drought stresses. Positively regulates the expression of genes involved in proline synthesis and transport, and genes involved in reactive oxygen species (ROS) scavenging such as peroxidase, superoxide dismutase and catalase during salt stress. Transactivates stress-related genes, including LEA3, RAB16A and DREB2A during salt stress. This chain is Transcription factor MYB2, found in Oryza sativa subsp. japonica (Rice).